The primary structure comprises 217 residues: Uracil-DNA glycosylase (217 aa).

The Proton acceptor role is filled by D62.

Belongs to the uracil-DNA glycosylase (UDG) superfamily. UNG family.

The protein localises to the cytoplasm. It carries out the reaction Hydrolyzes single-stranded DNA or mismatched double-stranded DNA and polynucleotides, releasing free uracil.. Its function is as follows. Excises uracil residues from the DNA which can arise as a result of misincorporation of dUMP residues by DNA polymerase or due to deamination of cytosine. This Streptococcus pyogenes serotype M4 (strain MGAS10750) protein is Uracil-DNA glycosylase.